A 276-amino-acid polypeptide reads, in one-letter code: Large ribosomal subunit protein uL2 (276 aa).

Disordered regions lie at residues 33–55 (LVEA…RHIG) and 221–276 (RGTA…AKKK).

This sequence belongs to the universal ribosomal protein uL2 family. As to quaternary structure, part of the 50S ribosomal subunit. Forms a bridge to the 30S subunit in the 70S ribosome.

Functionally, one of the primary rRNA binding proteins. Required for association of the 30S and 50S subunits to form the 70S ribosome, for tRNA binding and peptide bond formation. It has been suggested to have peptidyltransferase activity; this is somewhat controversial. Makes several contacts with the 16S rRNA in the 70S ribosome. This Psychrobacter sp. (strain PRwf-1) protein is Large ribosomal subunit protein uL2.